The primary structure comprises 122 residues: MTTVAVWVGVALIGGVGSVLRFVVDGAVARRASRPFPLGTLVVNLSGAALLGFLGGLALSREAALLAGTAFVGAYTTFSTWMLETQRLGEERQLRAALANIVVSVVLGGAAAFIGQQLAQLV.

Transmembrane regions (helical) follow at residues 4-24 (VAVWVGVALIGGVGSVLRFVV), 38-58 (LGTLVVNLSGAALLGFLGGLA), 63-83 (AALLAGTAFVGAYTTFSTWML), and 96-116 (AALANIVVSVVLGGAAAFIGQ). Na(+)-binding residues include glycine 73 and threonine 76.

It belongs to the fluoride channel Fluc/FEX (TC 1.A.43) family.

The protein localises to the cell membrane. The catalysed reaction is fluoride(in) = fluoride(out). Its activity is regulated as follows. Na(+) is not transported, but it plays an essential structural role and its presence is essential for fluoride channel function. Fluoride-specific ion channel. Important for reducing fluoride concentration in the cell, thus reducing its toxicity. This Mycolicibacterium paratuberculosis (strain ATCC BAA-968 / K-10) (Mycobacterium paratuberculosis) protein is Fluoride-specific ion channel FluC 2.